The sequence spans 174 residues: Shikimate kinase 2 (174 aa).

An ATP-binding site is contributed by 12–17 (GCGKTT). Positions 16 and 32 each coordinate Mg(2+). The substrate site is built by Asp-34, Arg-58, and Gly-79. The tract at residues 112–126 (QAAPEEDLRPTLTGK) is LID domain. Residue Arg-120 participates in ATP binding. Position 139 (Arg-139) interacts with substrate.

Belongs to the shikimate kinase family. AroL subfamily. As to quaternary structure, monomer. Requires Mg(2+) as cofactor.

It localises to the cytoplasm. It catalyses the reaction shikimate + ATP = 3-phosphoshikimate + ADP + H(+). The protein operates within metabolic intermediate biosynthesis; chorismate biosynthesis; chorismate from D-erythrose 4-phosphate and phosphoenolpyruvate: step 5/7. Its function is as follows. Catalyzes the specific phosphorylation of the 3-hydroxyl group of shikimic acid using ATP as a cosubstrate. This chain is Shikimate kinase 2, found in Escherichia coli O7:K1 (strain IAI39 / ExPEC).